A 110-amino-acid polypeptide reads, in one-letter code: Large ribosomal subunit protein uL22 (110 aa).

The protein belongs to the universal ribosomal protein uL22 family. Part of the 50S ribosomal subunit.

This protein binds specifically to 23S rRNA; its binding is stimulated by other ribosomal proteins, e.g. L4, L17, and L20. It is important during the early stages of 50S assembly. It makes multiple contacts with different domains of the 23S rRNA in the assembled 50S subunit and ribosome. In terms of biological role, the globular domain of the protein is located near the polypeptide exit tunnel on the outside of the subunit, while an extended beta-hairpin is found that lines the wall of the exit tunnel in the center of the 70S ribosome. The polypeptide is Large ribosomal subunit protein uL22 (Vesicomyosocius okutanii subsp. Calyptogena okutanii (strain HA)).